Consider the following 165-residue polypeptide: Neuropeptide W (165 aa).

The N-terminal stretch at 1–32 (MAWRPGERGAPASRPRLALLLLLLLLPLPSGA) is a signal peptide. Residues 65–165 (ALRAAAGPLA…GLPCLAPGPF (101 aa)) constitute a propeptide that is removed on maturation. The disordered stretch occupies residues 106 to 165 (SQAGIPVRAPRSPRAPEPALEPESLDFSGAGQRLRRDVSRPAVDPAANRLGLPCLAPGPF). Residues 113–127 (RAPRSPRAPEPALEP) are compositionally biased toward low complexity. Ser-133 carries O-linked (Xyl...) (chondroitin sulfate) serine glycosylation.

This sequence belongs to the neuropeptide B/W family. Detected in cerebrospinal fluid and urine (at protein level). Detected at high levels in the substantia nigra, fetal kidney and trachea; at lower levels in testis, uterus, ovary and placenta. Not detectable in many regions of the central nervous system. Also detected at high levels in lymphoblastic leukemia and colorectal adenocarcinoma.

It is found in the secreted. Its function is as follows. Plays a regulatory role in the organization of neuroendocrine signals accessing the anterior pituitary gland. Stimulates water drinking and food intake. May play a role in the hypothalamic response to stress. NPW23 activates GPR7 and GPR8 more efficiently than NPW30. In Homo sapiens (Human), this protein is Neuropeptide W (NPW).